We begin with the raw amino-acid sequence, 520 residues long: Sodium-dependent dicarboxylate transporter SdcS (520 aa).

14 helical membrane-spanning segments follow: residues 30–50 (AGQL…LLFF), 55–75 (LPWK…WWIT), 77–97 (AIPI…GHIL), 104–124 (SEYG…AIAM), 160–180 (SMFV…LAII), 207–227 (IGYA…PLII), 242–262 (FAKW…ITWL), 298–318 (KVVQ…EFLL), 323–343 (VTSS…LFVI), 362–382 (ELPW…KGIS), 399–419 (GVSP…LTEV), 428–448 (MILP…LLLM), 452–472 (AMAA…AIIF), and 491–511 (LISA…VLGI).

It belongs to the SLC13A/DASS transporter (TC 2.A.47) family. NADC subfamily.

The protein resides in the cell membrane. In terms of biological role, mediates the transport of the dicarboxylates fumarate, malate, and succinate across the cytoplasmic membrane via a Na(+)-electrochemical gradient. This chain is Sodium-dependent dicarboxylate transporter SdcS (sdcS), found in Staphylococcus aureus (strain MSSA476).